Reading from the N-terminus, the 207-residue chain is Peptidyl-tRNA hydrolase (207 aa).

Y30 is a binding site for tRNA. The Proton acceptor role is filled by H35. 3 residues coordinate tRNA: Y81, N83, and N129.

The protein belongs to the PTH family. In terms of assembly, monomer.

It is found in the cytoplasm. It catalyses the reaction an N-acyl-L-alpha-aminoacyl-tRNA + H2O = an N-acyl-L-amino acid + a tRNA + H(+). Its function is as follows. Hydrolyzes ribosome-free peptidyl-tRNAs (with 1 or more amino acids incorporated), which drop off the ribosome during protein synthesis, or as a result of ribosome stalling. Functionally, catalyzes the release of premature peptidyl moieties from peptidyl-tRNA molecules trapped in stalled 50S ribosomal subunits, and thus maintains levels of free tRNAs and 50S ribosomes. The chain is Peptidyl-tRNA hydrolase from Bordetella avium (strain 197N).